We begin with the raw amino-acid sequence, 392 residues long: MALQPAAGARDLNPQQVELNQKLSQRLAEVYRLWGYDEVSPPRVERLETLKAGGAIASQDIVRLVADEPLGLRPEMTASIARAACTRLKQRPRPLRLWAAGTIFESRTADEGSLCIEENLQSGVELFGVEPINAEMELLSLLFSAVETLELSKRHQPRLLVGHTALMDLIMLPFQNDLREKIRTALIHYDRLALESLQLPNDQFERLLHHLECRGEPLDVLERLSGLFGTQQALNNLQRLFEQMSPLAADQGIDLQLDPTFQPHFELYTGLVFQLVCQSDAAPVVIARGGRYDNLVARCGAKGLQAAGVGFSFAIDDIRELLTKEIKASDAVETTLVAYGEQATLEHALKRQRHWHKQGQRAVVELEACRDREDAFSRLSDRGCSTLDWLDH.

It belongs to the class-II aminoacyl-tRNA synthetase family. HisZ subfamily. Heteromultimer composed of HisG and HisZ subunits.

Its subcellular location is the cytoplasm. It functions in the pathway amino-acid biosynthesis; L-histidine biosynthesis; L-histidine from 5-phospho-alpha-D-ribose 1-diphosphate: step 1/9. Its function is as follows. Required for the first step of histidine biosynthesis. May allow the feedback regulation of ATP phosphoribosyltransferase activity by histidine. In Prochlorococcus marinus (strain MIT 9313), this protein is ATP phosphoribosyltransferase regulatory subunit.